The primary structure comprises 149 residues: 3-dehydroquinate dehydratase (149 aa).

The active-site Proton acceptor is tyrosine 24. Residues asparagine 75, histidine 81, and aspartate 88 each contribute to the substrate site. Catalysis depends on histidine 101, which acts as the Proton donor. Substrate is bound by residues 102–103 (IS) and arginine 112.

It belongs to the type-II 3-dehydroquinase family. Homododecamer.

It catalyses the reaction 3-dehydroquinate = 3-dehydroshikimate + H2O. Its pathway is metabolic intermediate biosynthesis; chorismate biosynthesis; chorismate from D-erythrose 4-phosphate and phosphoenolpyruvate: step 3/7. Its function is as follows. Catalyzes a trans-dehydration via an enolate intermediate. The protein is 3-dehydroquinate dehydratase of Methylobacterium radiotolerans (strain ATCC 27329 / DSM 1819 / JCM 2831 / NBRC 15690 / NCIMB 10815 / 0-1).